The sequence spans 863 residues: Paramyosin (863 aa).

The interval 1–18 is nonhelical region; the sequence is MSESHVKISRTIIRGTSP. The stretch at 19 to 836 forms a coiled coil; it reads STVRLESRVR…ERTITIKRTI (818 aa). Residues 837 to 863 are nonhelical region; that stretch reads GGPGSRAVSVVREINSVSRGNRATSIM.

This sequence belongs to the paramyosin family. As to quaternary structure, homodimer or monomer in secreted form.

The protein localises to the cytoplasm. The protein resides in the myofibril. Its subcellular location is the secreted. Functionally, paramyosin is a major structural component of many thick filaments isolated from invertebrate muscles. It is a prominent antigen in human cysticercosis, may have a role as a modulator of the host immune response. It is able to bind collagen and has complement inhibitor activity. The chain is Paramyosin (PMY) from Taenia solium (Pork tapeworm).